Reading from the N-terminus, the 556-residue chain is Vetispiradiene synthase 1 (556 aa).

Mg(2+)-binding residues include Asp-309, Asp-313, Asp-452, Thr-456, and Glu-460. The DDXXD motif motif lies at 309–313; it reads DDTFD.

The protein belongs to the terpene synthase family. Tpsa subfamily. Requires Mg(2+) as cofactor.

The protein localises to the cytoplasm. The catalysed reaction is (2E,6E)-farnesyl diphosphate = (-)-vetispiradiene + diphosphate. It participates in secondary metabolite biosynthesis; terpenoid biosynthesis. In terms of biological role, sesquiterpene synthase that catalyzes the formation of vetispiradiene from trans,trans-farnesyl diphosphate. The initial internal cyclization produces the monocyclic intermediate germacrene A. This Solanum tuberosum (Potato) protein is Vetispiradiene synthase 1 (PVS1).